Reading from the N-terminus, the 398-residue chain is Cell division protein FtsZ (398 aa).

GTP-binding positions include 24-28 (GAGGN), 111-113 (GTG), glutamate 154, arginine 158, and aspartate 202. A disordered region spans residues 333–381 (GRNNKSETSPISQSEDSEKEKFKWPYSQSESTQDKTLETKPAEQVSEGA). A compositionally biased stretch (basic and acidic residues) spans 364–373 (TQDKTLETKP).

The protein belongs to the FtsZ family. Homodimer. Polymerizes to form a dynamic ring structure in a strictly GTP-dependent manner. Interacts directly with several other division proteins.

It is found in the cytoplasm. In terms of biological role, essential cell division protein that forms a contractile ring structure (Z ring) at the future cell division site. The regulation of the ring assembly controls the timing and the location of cell division. One of the functions of the FtsZ ring is to recruit other cell division proteins to the septum to produce a new cell wall between the dividing cells. Binds GTP and shows GTPase activity. The protein is Cell division protein FtsZ of Wolbachia sp.